Reading from the N-terminus, the 676-residue chain is DNA ligase (676 aa).

Residues 32–36 (DAEYD), 81–82 (SL), and Glu113 each bind NAD(+). The N6-AMP-lysine intermediate role is filled by Lys115. Residues Arg136, Glu173, Lys291, and Lys315 each contribute to the NAD(+) site. Residues Cys409, Cys412, Cys427, and Cys433 each coordinate Zn(2+). The BRCT domain occupies 595–676 (SEKTYFFNKK…LNSLIRIKEQ (82 aa)).

The protein belongs to the NAD-dependent DNA ligase family. LigA subfamily. Requires Mg(2+) as cofactor. Mn(2+) serves as cofactor.

It carries out the reaction NAD(+) + (deoxyribonucleotide)n-3'-hydroxyl + 5'-phospho-(deoxyribonucleotide)m = (deoxyribonucleotide)n+m + AMP + beta-nicotinamide D-nucleotide.. Functionally, DNA ligase that catalyzes the formation of phosphodiester linkages between 5'-phosphoryl and 3'-hydroxyl groups in double-stranded DNA using NAD as a coenzyme and as the energy source for the reaction. It is essential for DNA replication and repair of damaged DNA. This chain is DNA ligase, found in Buchnera aphidicola subsp. Acyrthosiphon pisum (strain Tuc7).